We begin with the raw amino-acid sequence, 364 residues long: Methylthioribose-1-phosphate isomerase (364 aa).

Asp254 functions as the Proton donor in the catalytic mechanism.

The protein belongs to the eIF-2B alpha/beta/delta subunits family. MtnA subfamily.

The protein resides in the cytoplasm. It is found in the nucleus. It carries out the reaction 5-(methylsulfanyl)-alpha-D-ribose 1-phosphate = 5-(methylsulfanyl)-D-ribulose 1-phosphate. It participates in amino-acid biosynthesis; L-methionine biosynthesis via salvage pathway; L-methionine from S-methyl-5-thio-alpha-D-ribose 1-phosphate: step 1/6. In terms of biological role, catalyzes the interconversion of methylthioribose-1-phosphate (MTR-1-P) into methylthioribulose-1-phosphate (MTRu-1-P). The chain is Methylthioribose-1-phosphate isomerase from Drosophila sechellia (Fruit fly).